Here is a 695-residue protein sequence, read N- to C-terminus: uncharacterized protein (695 aa).

This is an uncharacterized protein from Xanthomonas campestris pv. campestris (strain ATCC 33913 / DSM 3586 / NCPPB 528 / LMG 568 / P 25).